Consider the following 275-residue polypeptide: Mitochondrial outer membrane porin (275 aa).

The protein belongs to the eukaryotic mitochondrial porin (TC 1.B.8.1) family.

The protein localises to the mitochondrion outer membrane. Forms a channel through the cell membrane that allows diffusion of small hydrophilic molecules. The channel adopts an open conformation at low or zero membrane potential and a closed conformation at potentials above 30-40 mV. The open state has a weak anion selectivity whereas the closed state is cation-selective. This Triticum aestivum (Wheat) protein is Mitochondrial outer membrane porin (VDAC1).